We begin with the raw amino-acid sequence, 96 residues long: U-scoloptoxin(06)-Sm1a (96 aa).

The signal sequence occupies residues M1–A23.

This sequence belongs to the scoloptoxin-06 family. In terms of processing, contains 2 disulfide bonds. As to expression, expressed by the venom gland.

The protein resides in the secreted. The polypeptide is U-scoloptoxin(06)-Sm1a (Scolopendra morsitans (Tanzanian blue ringleg centipede)).